An 81-amino-acid chain; its full sequence is Sulfur carrier protein TusA (81 aa).

Cys-19 functions as the Cysteine persulfide intermediate in the catalytic mechanism.

It belongs to the sulfur carrier protein TusA family.

It is found in the cytoplasm. Functionally, sulfur carrier protein which probably makes part of a sulfur-relay system. The protein is Sulfur carrier protein TusA of Shewanella putrefaciens (strain CN-32 / ATCC BAA-453).